The following is a 297-amino-acid chain: Homeobox protein HMX3 (297 aa).

Disordered regions lie at residues 24–43 and 96–172; these read NSDSKPSKPKPILAPTKAGL and AAQK…RKKK. Composition is skewed to basic and acidic residues over residues 109–123 and 145–166; these read TDRDSPELVLKSDPD and EDGKKEGGIDDWKKSDDGADKK. Residues 170–229 constitute a DNA-binding region (homeobox); that stretch reads KKKTRTVFSRSQVFQLESTFDMKRYLSSSERAGLAASLHLTETQVKIWFQNRRNKWKRQL.

Belongs to the HMX homeobox family. Expressed in the ear placode and vesicle and in cells forming the vestibulo-acoustic ganglion. Also expressed in the lateral line.

The protein resides in the nucleus. Functionally, transcription factor involved in specification of neuronal cell types and which is required for inner ear and hypothalamus development. Binds to the 5'-CAAGTG-3' core sequence. This is Homeobox protein HMX3 (hmx3) from Danio rerio (Zebrafish).